A 622-amino-acid polypeptide reads, in one-letter code: Cilia- and flagella-associated protein 206 (622 aa).

Belongs to the CFAP206 family.

The protein localises to the cytoplasm. It localises to the cytoskeleton. The protein resides in the cilium axoneme. It is found in the cilium basal body. Functionally, essential for sperm motility and is involved in the regulation of the beating frequency of motile cilia on the epithelial cells of the respiratory tract. Required for the establishment of radial spokes in sperm flagella. This is Cilia- and flagella-associated protein 206 from Rattus norvegicus (Rat).